A 64-amino-acid chain; its full sequence is Large ribosomal subunit protein bL35 (64 aa).

Residues 1-43 form a disordered region; that stretch reads MPKMKSKKSLAKRVIAKKNGTLKRGKAYRSHRATGKTTKQKRH.

Belongs to the bacterial ribosomal protein bL35 family.

This chain is Large ribosomal subunit protein bL35, found in Mesoplasma florum (strain ATCC 33453 / NBRC 100688 / NCTC 11704 / L1) (Acholeplasma florum).